We begin with the raw amino-acid sequence, 443 residues long: Adenylyltransferase and sulfurtransferase UBA4 (443 aa).

Residues glycine 81, aspartate 102, 109–113 (SNLHR), lysine 126, and 170–171 (DS) contribute to the ATP site. 2 residues coordinate Zn(2+): cysteine 212 and cysteine 215. Cysteine 229 acts as the Glycyl thioester intermediate; for adenylyltransferase activity in catalysis. The Zn(2+) site is built by cysteine 290 and cysteine 293. The 100-residue stretch at 342 to 441 (KERGFVCLDV…YIDEINPSLP (100 aa)) folds into the Rhodanese domain. Cysteine 400 (cysteine persulfide intermediate; for sulfurtransferase activity) is an active-site residue.

In the N-terminal section; belongs to the HesA/MoeB/ThiF family. UBA4 subfamily. It depends on Zn(2+) as a cofactor.

The protein resides in the cytoplasm. Its subcellular location is the cytosol. Its pathway is tRNA modification; 5-methoxycarbonylmethyl-2-thiouridine-tRNA biosynthesis. Plays a central role in 2-thiolation of mcm(5)S(2)U at tRNA wobble positions of cytosolic tRNA(Lys), tRNA(Glu) and tRNA(Gln). Acts by mediating the C-terminal thiocarboxylation of sulfur carrier URM1. Its N-terminus first activates URM1 as acyl-adenylate (-COAMP), then the persulfide sulfur on the catalytic cysteine is transferred to URM1 to form thiocarboxylation (-COSH) of its C-terminus. The reaction probably involves hydrogen sulfide that is generated from the persulfide intermediate and that acts as a nucleophile towards URM1. Subsequently, a transient disulfide bond is formed. Does not use thiosulfate as sulfur donor; NFS1 probably acting as a sulfur donor for thiocarboxylation reactions. Prior mcm(5) tRNA modification by the elongator complex is required for 2-thiolation. May also be involved in protein urmylation. This chain is Adenylyltransferase and sulfurtransferase UBA4, found in Eremothecium gossypii (strain ATCC 10895 / CBS 109.51 / FGSC 9923 / NRRL Y-1056) (Yeast).